A 299-amino-acid chain; its full sequence is Probable lipid kinase YegS (299 aa).

The DAGKc domain maps to 2-133; that stretch reads AEFPASLLIL…IDMAQVNKQT (132 aa). ATP-binding positions include threonine 40, 66–72, and threonine 95; that span reads GDGTINE. Mg(2+) is bound by residues leucine 215, aspartate 218, and leucine 220. Glutamate 271 acts as the Proton acceptor in catalysis.

The protein belongs to the diacylglycerol/lipid kinase family. YegS lipid kinase subfamily. Mg(2+) is required as a cofactor. It depends on Ca(2+) as a cofactor.

It localises to the cytoplasm. In terms of biological role, probably phosphorylates lipids; the in vivo substrate is unknown. This chain is Probable lipid kinase YegS, found in Escherichia coli O127:H6 (strain E2348/69 / EPEC).